The primary structure comprises 118 residues: uncharacterized protein (118 aa).

Helical transmembrane passes span alanine 5–isoleucine 25 and phenylalanine 40–isoleucine 57.

It is found in the membrane. This is an uncharacterized protein from African swine fever virus (strain Badajoz 1971 Vero-adapted) (Ba71V).